We begin with the raw amino-acid sequence, 160 residues long: Deoxyuridine 5'-triphosphate nucleotidohydrolase (160 aa).

Residues 76-78, asparagine 89, and 93-95 contribute to the substrate site; these read RSG and TID. Residues 139-149 are compositionally biased toward basic and acidic residues; it reads HTLSDTERGED. The tract at residues 139-160 is disordered; it reads HTLSDTERGEDGFGSTGHGSHQ. Residues 150–160 show a composition bias toward gly residues; that stretch reads GFGSTGHGSHQ.

Belongs to the dUTPase family. The cofactor is Mg(2+).

It catalyses the reaction dUTP + H2O = dUMP + diphosphate + H(+). Its pathway is pyrimidine metabolism; dUMP biosynthesis; dUMP from dCTP (dUTP route): step 2/2. This enzyme is involved in nucleotide metabolism: it produces dUMP, the immediate precursor of thymidine nucleotides and it decreases the intracellular concentration of dUTP so that uracil cannot be incorporated into DNA. The sequence is that of Deoxyuridine 5'-triphosphate nucleotidohydrolase from Beijerinckia indica subsp. indica (strain ATCC 9039 / DSM 1715 / NCIMB 8712).